Consider the following 354-residue polypeptide: NADH-quinone oxidoreductase subunit H (354 aa).

Helical transmembrane passes span 23–43, 91–111, 124–144, 162–182, 203–223, 250–270, 291–311, and 330–350; these read LVRA…LILW, YIIA…VVPF, LLYV…AGWA, ISYE…TGSL, ILSW…ISGV, GMAF…ISAM, IPGF…FIWL, and IFIP…VSPW.

The protein belongs to the complex I subunit 1 family. As to quaternary structure, NDH-1 is composed of 14 different subunits. Subunits NuoA, H, J, K, L, M, N constitute the membrane sector of the complex.

The protein localises to the cell inner membrane. It carries out the reaction a quinone + NADH + 5 H(+)(in) = a quinol + NAD(+) + 4 H(+)(out). In terms of biological role, NDH-1 shuttles electrons from NADH, via FMN and iron-sulfur (Fe-S) centers, to quinones in the respiratory chain. The immediate electron acceptor for the enzyme in this species is believed to be ubiquinone. Couples the redox reaction to proton translocation (for every two electrons transferred, four hydrogen ions are translocated across the cytoplasmic membrane), and thus conserves the redox energy in a proton gradient. This subunit may bind ubiquinone. The polypeptide is NADH-quinone oxidoreductase subunit H (Ralstonia nicotianae (strain ATCC BAA-1114 / GMI1000) (Ralstonia solanacearum)).